Here is a 485-residue protein sequence, read N- to C-terminus: MSLFDHSVSELHKKLNNKEISVTDLVEESYKRIADVEDNVKAFLTLDEENARAKAKELDAKIGAEDNGLLFGMPIGVKDNIVTNGLRTTCASKILANFDPIYDATVVQKLKAADTITIGKLNMDEFAMGSSNENSGFYATKNPWNLDYVPGGSSGGSAAAVAAGEVLFSLGSDTGGSIRQPAAYCGVVGLKPTYGRVSRYGLVAFASSLDQIGPITRTVEDNAYLLQAISGIDRMDATSANVEVGNYLAGLTGDVKGLRIAVPKEYLGEGVGEEARESVLAALKVLEGMGATWEEVSLPHSKYALATYYLLSSSEASANLSRFDGVRYGVRSDNVNNLLDLYKNTRSEGFGDEVKRRIMLGTFALSSGYYDAYYKKAQQVRTLIKNDFENVFANYDVIIGPTTPTPAFKVGEKVDDPMTMYANDILTIPVNLAGVPAISVPCGFGANNMPLGLQIIGKHFDEATIYRVAHAFEQATDYHTKKASL.

Active-site charge relay system residues include Lys-78 and Ser-153. Catalysis depends on Ser-177, which acts as the Acyl-ester intermediate.

This sequence belongs to the amidase family. GatA subfamily. Heterotrimer of A, B and C subunits.

It carries out the reaction L-glutamyl-tRNA(Gln) + L-glutamine + ATP + H2O = L-glutaminyl-tRNA(Gln) + L-glutamate + ADP + phosphate + H(+). Functionally, allows the formation of correctly charged Gln-tRNA(Gln) through the transamidation of misacylated Glu-tRNA(Gln) in organisms which lack glutaminyl-tRNA synthetase. The reaction takes place in the presence of glutamine and ATP through an activated gamma-phospho-Glu-tRNA(Gln). In Bacillus cereus (strain ATCC 14579 / DSM 31 / CCUG 7414 / JCM 2152 / NBRC 15305 / NCIMB 9373 / NCTC 2599 / NRRL B-3711), this protein is Glutamyl-tRNA(Gln) amidotransferase subunit A.